Here is a 352-residue protein sequence, read N- to C-terminus: 2'-dehydrokanamycin reductase (352 aa).

Belongs to the NAD(P)-dependent epimerase/dehydratase family.

The enzyme catalyses 2'-dehydrokanamycin A + NADPH + H(+) = kanamycin A + NADP(+). The protein operates within antibiotic biosynthesis; kanamycin biosynthesis. In terms of biological role, mediates the conversion of 2'-dehydrokanamycin A into kanamycin A. In Streptomyces kanamyceticus, this protein is 2'-dehydrokanamycin reductase (kanK).